The following is a 240-amino-acid chain: Large ribosomal subunit protein uL2 (240 aa).

Over residues 1-11 (MGKRLISQNRG) the composition is skewed to polar residues. Disordered stretches follow at residues 1–26 (MGKR…KRKG) and 206–240 (GGGR…TGRK). 2 stretches are compositionally biased toward basic residues: residues 13–26 (GTPK…KRKG) and 228–240 (KVGH…TGRK).

The protein belongs to the universal ribosomal protein uL2 family. In terms of assembly, part of the 50S ribosomal subunit. Forms a bridge to the 30S subunit in the 70S ribosome.

In terms of biological role, one of the primary rRNA binding proteins. Required for association of the 30S and 50S subunits to form the 70S ribosome, for tRNA binding and peptide bond formation. It has been suggested to have peptidyltransferase activity; this is somewhat controversial. Makes several contacts with the 16S rRNA in the 70S ribosome. This Methanococcus vannielii (strain ATCC 35089 / DSM 1224 / JCM 13029 / OCM 148 / SB) protein is Large ribosomal subunit protein uL2.